Here is a 963-residue protein sequence, read N- to C-terminus: Seizure 6-like protein (963 aa).

A signal peptide spans 1–31 (MPVARPQAAGPDRISLFLVAFLLGSPAAAQA). Disordered regions lie at residues 28–63 (AAQA…GVTS), 116–150 (RPLA…TAPA), and 164–204 (LPHS…TTTS). Residues 32 to 897 (EDGGPEGEMH…ESSLEGGNMA (866 aa)) lie on the Extracellular side of the membrane. Residues 47–59 (LLPSASLESSLEE) are compositionally biased toward low complexity. Over residues 120 to 135 (TPTTLQRLGSPASATT) the composition is skewed to polar residues. Positions 191 to 204 (TGSASEESQETTTS) are enriched in low complexity. C221 and C248 form a disulfide bridge. Positions 221 to 329 (CGVSFSDPEG…GTFQLHYQAF (109 aa)) constitute a CUB 1 domain. 3 N-linked (GlcNAc...) asparagine glycosylation sites follow: N251, N268, and N290. The Sushi 1 domain maps to 331–390 (LSCPFPRRPDAGEVTVMDLHSGGVAHFHCHLGYELQGAKTLTCINASKPHWSSQEPVCSA). 3 disulfides stabilise this stretch: C333/C373, C359/C388, and C392/C419. 6 N-linked (GlcNAc...) asparagine glycosylation sites follow: N375, N398, N414, N454, N516, and N558. The CUB 2 domain occupies 392–502 (CGGAVHNATI…SAFNIRFEAF (111 aa)). Residues 505-566 (GHCYEPYIQN…WNDTEPLCRA (62 aa)) form the Sushi 2 domain. Cystine bridges form between C507/C549, C534/C564, and C568/C594. Positions 568–679 (CGGELSAVAG…QGFIMNYIEV (112 aa)) constitute a CUB 3 domain. N-linked (GlcNAc...) asparagine glycans are attached at residues N614 and N682. 3 consecutive Sushi domains span residues 683–742 (DSCS…FCEK), 744–807 (MYCT…HCVS), and 811–872 (LACD…ICKV). Cystine bridges form between C685–C727, C713–C740, C746–C788, C774–C805, C813–C855, and C841–C870. The chain crosses the membrane as a helical span at residues 898–918 (LAIFIPVLLISLLLGGAYIYV). Residues 919–963 (TRCRQYSSLRLPLMYSHPYSQITVETEFDNPIYETGETREYEVSI) lie on the Cytoplasmic side of the membrane.

Belongs to the SEZ6 family. As to expression, expressed exclusively in the brain, predominantly in neurons. Wide expression in the gray matter of the brain with high levels in the olfactory bulb, anterior olfactory nuclei, hippocampal formation and cerebellar cortex. Detected diffusely and weakly in the white matter, such as the corpus callosum and cerebellar medulla. In the cerebellar cortex, intensely expressed in Purkinje cells and granule cells. Detected also in interneurons in the molecular layer.

It is found in the cell membrane. The protein resides in the endoplasmic reticulum membrane. Candidate tumor suppressor gene. May contribute to specialized endoplasmic reticulum functions in neurons. This Mus musculus (Mouse) protein is Seizure 6-like protein (Sez6l).